Reading from the N-terminus, the 219-residue chain is Guanylate kinase (219 aa).

The Guanylate kinase-like domain occupies 15-194; that stretch reads GLMFVLSSPS…AFAEVHSILK (180 aa). Residue 22–29 coordinates ATP; sequence SPSGAGKT.

It belongs to the guanylate kinase family.

It is found in the cytoplasm. It carries out the reaction GMP + ATP = GDP + ADP. Essential for recycling GMP and indirectly, cGMP. The chain is Guanylate kinase from Rhodopseudomonas palustris (strain BisB18).